We begin with the raw amino-acid sequence, 158 residues long: Non-secretory ribonuclease (158 aa).

The first 27 residues, 1-27 (MVPKLFTSQICLLLLLGLLGVEGSLHA), serve as a signal peptide directing secretion. The active-site Proton acceptor is the His42. 4 disulfides stabilise this stretch: Cys50–Cys110, Cys64–Cys121, Cys82–Cys136, and Cys89–Cys98. A 3'-nitrotyrosine modification is found at Tyr60. 65 to 69 (KNQNT) provides a ligand contact to substrate. N-linked (GlcNAc...) asparagine glycans are attached at residues Asn86, Asn92, and Asn111. The active-site Proton donor is His153.

Belongs to the pancreatic ribonuclease family. In terms of assembly, interacts with and forms a tight 1:1 complex with RNH1. Dimerization of two such complexes may occur.

It is found in the lysosome. The protein localises to the cytoplasmic granule. It catalyses the reaction an [RNA] containing cytidine + H2O = an [RNA]-3'-cytidine-3'-phosphate + a 5'-hydroxy-ribonucleotide-3'-[RNA].. It carries out the reaction an [RNA] containing uridine + H2O = an [RNA]-3'-uridine-3'-phosphate + a 5'-hydroxy-ribonucleotide-3'-[RNA].. Its function is as follows. This is a non-secretory ribonuclease. It is a pyrimidine specific nuclease with a slight preference for U. Cytotoxin and helminthotoxin. Possesses a wide variety of biological activities. In Aotus trivirgatus (Three-striped night monkey), this protein is Non-secretory ribonuclease (RNASE2).